A 406-amino-acid chain; its full sequence is Cysteine desulfurase (406 aa).

The residue at position 226 (Lys226) is an N6-(pyridoxal phosphate)lysine. Cys364 serves as the catalytic Cysteine persulfide intermediate.

This sequence belongs to the class-V pyridoxal-phosphate-dependent aminotransferase family. Csd subfamily. Homodimer. Interacts with SufE and the SufBCD complex composed of SufB, SufC and SufD. The interaction with SufE is required to mediate the direct transfer of the sulfur atom from the S-sulfanylcysteine. Requires pyridoxal 5'-phosphate as cofactor.

It localises to the cytoplasm. The enzyme catalyses (sulfur carrier)-H + L-cysteine = (sulfur carrier)-SH + L-alanine. It catalyses the reaction L-selenocysteine + AH2 = hydrogenselenide + L-alanine + A + H(+). It participates in cofactor biosynthesis; iron-sulfur cluster biosynthesis. Its function is as follows. Cysteine desulfurases mobilize the sulfur from L-cysteine to yield L-alanine, an essential step in sulfur metabolism for biosynthesis of a variety of sulfur-containing biomolecules. Component of the suf operon, which is activated and required under specific conditions such as oxidative stress and iron limitation. Acts as a potent selenocysteine lyase in vitro, that mobilizes selenium from L-selenocysteine. Selenocysteine lyase activity is however unsure in vivo. The polypeptide is Cysteine desulfurase (Escherichia coli O7:K1 (strain IAI39 / ExPEC)).